A 306-amino-acid chain; its full sequence is MESRLKPGLIVLCGPTAAGKSSLAIAIAQRLGSPILSADSRLVYRDFNIGTAKPTPAEQQQVPHYLMDLCDPRQVFTVGDYQDCAVPLIQQLQEKGMLPLLVGGTGLYIKAIVNGLRFPRIAPQPKLRSQLQALGQPLCHALLQRVDPVAGDRIHVNDRVRTLRALEVFYVSGDRLTDLQQEQPPSYPILQIGLDSDRLEARIQQRTQQMLTSGFVEEVQGLCDRYGSDLPLLNTLGYRQVCAFLQGSLSRSELPEQIVLQTRQYAKQQRTWFRADSSIQWIDAEAGNRLERALDLIERFRKSEGV.

Residue 14-21 coordinates ATP; the sequence is GPTAAGKS. 16–21 is a substrate binding site; sequence TAAGKS. Positions 39-42 are interaction with substrate tRNA; it reads DSRL.

The protein belongs to the IPP transferase family. In terms of assembly, monomer. It depends on Mg(2+) as a cofactor.

The catalysed reaction is adenosine(37) in tRNA + dimethylallyl diphosphate = N(6)-dimethylallyladenosine(37) in tRNA + diphosphate. Its function is as follows. Catalyzes the transfer of a dimethylallyl group onto the adenine at position 37 in tRNAs that read codons beginning with uridine, leading to the formation of N6-(dimethylallyl)adenosine (i(6)A). The sequence is that of tRNA dimethylallyltransferase from Synechococcus sp. (strain ATCC 27144 / PCC 6301 / SAUG 1402/1) (Anacystis nidulans).